The sequence spans 149 residues: Protein-export protein SecB 2 (149 aa).

The protein belongs to the SecB family. In terms of assembly, homotetramer, a dimer of dimers. One homotetramer interacts with 1 SecA dimer.

It is found in the cytoplasm. One of the proteins required for the normal export of preproteins out of the cell cytoplasm. It is a molecular chaperone that binds to a subset of precursor proteins, maintaining them in a translocation-competent state. It also specifically binds to its receptor SecA. This chain is Protein-export protein SecB 2, found in Francisella tularensis subsp. tularensis (strain FSC 198).